Reading from the N-terminus, the 357-residue chain is MYKIAVLPGDGIGPEIVPEAVKVLEAVSRRVGIEFQFTEALVGGAAIDARGIALPPETLELCRQSDAVLLGAVGGPKWDTLPPAERPETAALLPLRKELGLYANLRPAFLYDSLVEASPLKKEIVTGTDLIIVRELTGGLYFGAKKREQTAEGEMAYDTMYYTRAEIERIVRLAFTIARQRRCHLTSVDKANVLTTSRLWRDTVEDIKGEFPEVTVEHMYVDNCAMQLVRRPAQFDVIVTENTFGDILSDQASVLTGSIGMLPSASIGGAVALYEPCHGSAPDIAGQQKANPLATILSAAMMLKYSFKMDQAAAAIEAAVGRVLAKGYRTPDLYVPGTQLVGTAEMGQLVRRELEEG.

NAD(+) is bound at residue 75 to 88 (GPKWDTLPPAERPE). Substrate-binding residues include arginine 96, arginine 106, arginine 134, and aspartate 222. 3 residues coordinate Mg(2+): aspartate 222, aspartate 246, and aspartate 250. NAD(+) is bound at residue 279–291 (GSAPDIAGQQKAN).

The protein belongs to the isocitrate and isopropylmalate dehydrogenases family. LeuB type 1 subfamily. Homodimer. Requires Mg(2+) as cofactor. It depends on Mn(2+) as a cofactor.

It is found in the cytoplasm. The catalysed reaction is (2R,3S)-3-isopropylmalate + NAD(+) = 4-methyl-2-oxopentanoate + CO2 + NADH. The protein operates within amino-acid biosynthesis; L-leucine biosynthesis; L-leucine from 3-methyl-2-oxobutanoate: step 3/4. Functionally, catalyzes the oxidation of 3-carboxy-2-hydroxy-4-methylpentanoate (3-isopropylmalate) to 3-carboxy-4-methyl-2-oxopentanoate. The product decarboxylates to 4-methyl-2 oxopentanoate. The polypeptide is 3-isopropylmalate dehydrogenase (Moorella thermoacetica (strain ATCC 39073 / JCM 9320)).